A 223-amino-acid chain; its full sequence is CKLF-like MARVEL transmembrane domain-containing protein 5 (223 aa).

In terms of domain architecture, MARVEL spans 29–213; the sequence is FLTSHKGILL…DAFKIYRTEM (185 aa). 4 helical membrane-spanning segments follow: residues 35–55, 56–76, 162–182, and 186–206; these read GILLETELALTLIIFICFTAS, ISAYMAAALLEFFITLAFLFL, FLRCVSAIIIFLVVSFAAVTS, and AAIAAFVFGIILVSIFAYDAF.

The protein belongs to the chemokine-like factor family. As to expression, highly expressed in the brain.

It localises to the membrane. The protein is CKLF-like MARVEL transmembrane domain-containing protein 5 (CMTM5) of Homo sapiens (Human).